The following is a 274-amino-acid chain: Dermonecrotic toxin LcsSicTox-betaIC1 (274 aa).

H5 is an active-site residue. Residues E25 and D27 each coordinate Mg(2+). H41 functions as the Nucleophile in the catalytic mechanism. 2 disulfide bridges follow: C45–C51 and C47–C190. N66 is a glycosylation site (N-linked (GlcNAc...) asparagine). Position 85 (D85) interacts with Mg(2+).

This sequence belongs to the arthropod phospholipase D family. Class II subfamily. Mg(2+) is required as a cofactor. Expressed by the venom gland.

It is found in the secreted. It carries out the reaction an N-(acyl)-sphingosylphosphocholine = an N-(acyl)-sphingosyl-1,3-cyclic phosphate + choline. It catalyses the reaction an N-(acyl)-sphingosylphosphoethanolamine = an N-(acyl)-sphingosyl-1,3-cyclic phosphate + ethanolamine. The enzyme catalyses a 1-acyl-sn-glycero-3-phosphocholine = a 1-acyl-sn-glycero-2,3-cyclic phosphate + choline. The catalysed reaction is a 1-acyl-sn-glycero-3-phosphoethanolamine = a 1-acyl-sn-glycero-2,3-cyclic phosphate + ethanolamine. Dermonecrotic toxins cleave the phosphodiester linkage between the phosphate and headgroup of certain phospholipids (sphingolipid and lysolipid substrates), forming an alcohol (often choline) and a cyclic phosphate. This toxin acts on sphingomyelin (SM). It may also act on ceramide phosphoethanolamine (CPE), lysophosphatidylcholine (LPC) and lysophosphatidylethanolamine (LPE), but not on lysophosphatidylserine (LPS), and lysophosphatidylglycerol (LPG). It acts by transphosphatidylation, releasing exclusively cyclic phosphate products as second products. Induces dermonecrosis, hemolysis, increased vascular permeability, edema, inflammatory response, and platelet aggregation. This chain is Dermonecrotic toxin LcsSicTox-betaIC1, found in Loxosceles cf. spinulosa (strain GJB-2008) (Recluse spider).